We begin with the raw amino-acid sequence, 481 residues long: MFS transporter eqxG (481 aa).

Residues 1 to 13 (MATTDPAIAAPDD) show a composition bias toward low complexity. Residues 1–58 (MATTDPAIAAPDDSQLEAGRENIRANVGDALEKPSSSTGTMVDEPTDPNVVDWDGPHD) form a disordered region. An N-linked (GlcNAc...) asparagine glycan is attached at asparagine 64. The helical transmembrane segment at 72-92 (LHLVIVSLFTLAANLAATMFA) threads the bilayer. A glycan (N-linked (GlcNAc...) asparagine) is linked at asparagine 106. The next 10 membrane-spanning stretches (helical) occupy residues 111 to 131 (AMTV…LAPL), 146 to 166 (FVYV…MFLV), 169 to 189 (IICG…VADL), 201 to 221 (LFTV…TVIF), 276 to 296 (PIVL…FLLF), 315 to 335 (GLAY…FSVL), 353 to 373 (LILM…YGWT), 380 to 400 (WIVP…VVIP), 403 to 423 (IYLV…ANLL), and 439 to 459 (LYVS…CLLF).

It belongs to the major facilitator superfamily.

Its subcellular location is the cell membrane. In terms of biological role, efflux pump that might be required for efficient secretion of equisetin or other secondary metabolies produced by the equisetin gene cluster. In Fusarium heterosporum, this protein is MFS transporter eqxG.